A 455-amino-acid chain; its full sequence is MIPSTAAALLTLTAGAAFAHTGCGGHEIGRRNVGGPMLYRRAVTDEASAAVSTDINTECTAYSYAPVTELISSFPTIWQTASIPSNDTEAQQLFGKINSTLNTKIPNDVPHGTPTGDWTGVNYSNSDPDCWWTHNKCTTPSNDTGLQADISIAPEPMTWGLGFDDGPNCSHNALYDLLLENNQKATMFFIGSNVLDWPLQAMRAHDEGHEICVHTWSHQYMTALSNEVVFAELYYTQKAIKAVLGVTPQCWRPPYGDVDNRVRMIAEGLNLTTIIWSDDTDDWAAGTNGVTEQDVTNNYQSVIDKAGNGTYTTHGPVVLNHELTNYTMSVFMTMFPKIKSAFNYIVPICTAYNITQPYAESNITCPNFETYISGVTNISSSTTQKDGSSSTNTASGSGAAGSASATSSSDDSSSSGGSSGSSGSNNASSGALGMFDSLSGVGLILGGVVAGVMLL.

A signal peptide spans 1–19 (MIPSTAAALLTLTAGAAFA). 4 N-linked (GlcNAc...) asparagine glycosylation sites follow: Asn86, Asn98, Asn122, and Asn142. One can recognise a NodB homology domain in the interval 157–347 (MTWGLGFDDG…IKSAFNYIVP (191 aa)). Asp164 acts as the Proton acceptor in catalysis. Position 164 (Asp164) interacts with acetate. Residue Asp165 coordinates Co(2+). Asn168 is a glycosylation site (N-linked (GlcNAc...) asparagine). Residues His214 and His218 each coordinate Co(2+). Tyr255 is an acetate binding site. N-linked (GlcNAc...) asparagine glycosylation is found at Asn270 and Asn308. The active-site Proton donor is His321. 4 N-linked (GlcNAc...) asparagine glycosylation sites follow: Asn325, Asn353, Asn362, and Asn377. The tract at residues 381–423 (STTQKDGSSSTNTASGSGAAGSASATSSSDDSSSSGGSSGSSG) is disordered. Asn426 carries N-linked (GlcNAc...) asparagine glycosylation. The GPI-anchor amidated serine moiety is linked to residue Ser429. A propeptide spans 430-455 (GALGMFDSLSGVGLILGGVVAGVMLL) (removed in mature form).

This sequence belongs to the polysaccharide deacetylase family. The cofactor is Co(2+). In terms of processing, the GPI anchor is required for the attachment to the cell membrane but not for cell surface targeting.

Its subcellular location is the secreted. The protein resides in the cell wall. It localises to the cell membrane. The enzyme catalyses [(1-&gt;4)-N-acetyl-beta-D-glucosaminyl](n) + n H2O = chitosan + n acetate. Its function is as follows. Hydrolyzes the N-acetamido groups of N-acetyl-D-glucosamine residues in chitin to form chitosan and acetate. Chitosan is required to anchor melanin to the cell wall, for maintenance of cell wall integrity, and for proper cytokinesis. Chitosan offers an advantage during infection as it is less readily detected than chitin by host immunosurveillance mechanisms. The sequence is that of Chitin deacetylase 2 from Cryptococcus neoformans var. grubii serotype A (strain H99 / ATCC 208821 / CBS 10515 / FGSC 9487) (Filobasidiella neoformans var. grubii).